We begin with the raw amino-acid sequence, 147 residues long: MPTYAPKAGDTTCSWYVIDATDVVLGRLAAVAATLLRGKHKPTFAPNVDGGDFVIVINADKVAISGDKVQHKMVYRHSGYPGGLRKRTIGELMQKHPDRVVEKAIVGMLPKNKLSRQIQRKLRVYAGPDHPHSAQQPVPFEIKQVAQ.

The protein belongs to the universal ribosomal protein uL13 family. As to quaternary structure, part of the 50S ribosomal subunit.

In terms of biological role, this protein is one of the early assembly proteins of the 50S ribosomal subunit, although it is not seen to bind rRNA by itself. It is important during the early stages of 50S assembly. The protein is Large ribosomal subunit protein uL13 of Mycobacterium leprae (strain Br4923).